A 965-amino-acid chain; its full sequence is UvrABC system protein A (965 aa).

32 to 39 (GLSGSGKS) serves as a coordination point for ATP. The C4-type zinc-finger motif lies at 254–281 (CPVCDYSLPELEPRLFSFNAPMGACPAC). ABC transporter domains follow at residues 311 to 588 (WDRR…PRSL) and 608 to 937 (PNAT…HFLA). ATP is bound at residue 641–648 (GVSGSGKS). The C4-type zinc-finger motif lies at 740–766 (CEACEGDGLIKVEMHFLPDVYVPCDIC).

It belongs to the ABC transporter superfamily. UvrA family. Forms a heterotetramer with UvrB during the search for lesions.

The protein resides in the cytoplasm. The UvrABC repair system catalyzes the recognition and processing of DNA lesions. UvrA is an ATPase and a DNA-binding protein. A damage recognition complex composed of 2 UvrA and 2 UvrB subunits scans DNA for abnormalities. When the presence of a lesion has been verified by UvrB, the UvrA molecules dissociate. The polypeptide is UvrABC system protein A (Xylella fastidiosa (strain Temecula1 / ATCC 700964)).